The following is a 126-amino-acid chain: Fatty acid-binding protein, liver (126 aa).

Alanine 2 is subject to N-acetylalanine.

This sequence belongs to the calycin superfamily. Fatty-acid binding protein (FABP) family.

The protein resides in the cytoplasm. Its function is as follows. Binds free fatty acids and their coenzyme A derivatives, bilirubin, and some other small molecules in the cytoplasm. May be involved in intracellular lipid transport. The sequence is that of Fatty acid-binding protein, liver (fabp1) from Schroederichthys bivius (Narrowmouthed catshark).